A 230-amino-acid chain; its full sequence is Cytidylate kinase (230 aa).

12–20 (GPSGAGKGT) contacts ATP.

This sequence belongs to the cytidylate kinase family. Type 1 subfamily.

The protein localises to the cytoplasm. It carries out the reaction CMP + ATP = CDP + ADP. The catalysed reaction is dCMP + ATP = dCDP + ADP. In Shewanella halifaxensis (strain HAW-EB4), this protein is Cytidylate kinase.